Consider the following 445-residue polypeptide: Argininosuccinate synthase (445 aa).

ATP is bound by residues 17–25 (AFSGGLDTS) and Ala43. Tyr99 lines the L-citrulline pocket. Gly129 and Thr131 together coordinate ATP. The L-aspartate site is built by Thr131, Asn135, and Asp136. Residue Asn135 participates in L-citrulline binding. Asp136 provides a ligand contact to ATP. Positions 139 and 192 each coordinate L-citrulline. Position 194 (Asp194) interacts with ATP. The L-citrulline site is built by Thr201, Glu203, and Glu280.

Belongs to the argininosuccinate synthase family. Type 2 subfamily. As to quaternary structure, homotetramer.

It localises to the cytoplasm. The enzyme catalyses L-citrulline + L-aspartate + ATP = 2-(N(omega)-L-arginino)succinate + AMP + diphosphate + H(+). It participates in amino-acid biosynthesis; L-arginine biosynthesis; L-arginine from L-ornithine and carbamoyl phosphate: step 2/3. The protein is Argininosuccinate synthase (argG) of Ralstonia nicotianae (strain ATCC BAA-1114 / GMI1000) (Ralstonia solanacearum).